Consider the following 128-residue polypeptide: Large ribosomal subunit protein bL17 (128 aa).

This sequence belongs to the bacterial ribosomal protein bL17 family. Part of the 50S ribosomal subunit. Contacts protein L32.

The sequence is that of Large ribosomal subunit protein bL17 from Hydrogenovibrio crunogenus (strain DSM 25203 / XCL-2) (Thiomicrospira crunogena).